Here is a 425-residue protein sequence, read N- to C-terminus: Oxytetracycline polyketide putative beta-ketoacyl synthase 1 (425 aa).

Residues 7-420 (ARRVVITGIG…GFQSAIVLTE (414 aa)) enclose the Ketosynthase family 3 (KS3) domain. Active-site for beta-ketoacyl synthase activity residues include Cys-173, His-313, and His-350.

It belongs to the thiolase-like superfamily. Beta-ketoacyl-ACP synthases family.

Its pathway is antibiotic biosynthesis; oxytetracycline biosynthesis. The polypeptide is Oxytetracycline polyketide putative beta-ketoacyl synthase 1 (Streptomyces rimosus).